Consider the following 273-residue polypeptide: MKVKFAKKYGFCFGVKRAIRIAERNQHATTFGPLIHNSREIERLQKDFDVSLSRSLEEAQKFKSVIVRTHGITKDDLQVLKEHHTHIIDATCPFVTKPQQIVEKMSQEGYQIIIFGDNSHPEVKGVASYGDDVAIIANIDELKHLTLKKKVALVSQTTKQPEHFGKIAALLVSLVNECRIFNTICSATFENQFAVDELSREADIMVIVGGKNSSNTKQLFKIAKEYCTDSYLIEDENEIDNTWFVGKELCGITAGASTPDWIISRVQEKIEQI.

Cys12 serves as a coordination point for [4Fe-4S] cluster. 2 residues coordinate (2E)-4-hydroxy-3-methylbut-2-enyl diphosphate: His36 and His70. The dimethylallyl diphosphate site is built by His36 and His70. Isopentenyl diphosphate contacts are provided by His36 and His70. Cys92 is a binding site for [4Fe-4S] cluster. His120 lines the (2E)-4-hydroxy-3-methylbut-2-enyl diphosphate pocket. His120 provides a ligand contact to dimethylallyl diphosphate. His120 lines the isopentenyl diphosphate pocket. Glu122 serves as the catalytic Proton donor. Thr157 contributes to the (2E)-4-hydroxy-3-methylbut-2-enyl diphosphate binding site. Residue Cys185 coordinates [4Fe-4S] cluster. 4 residues coordinate (2E)-4-hydroxy-3-methylbut-2-enyl diphosphate: Ser213, Ser214, Asn215, and Ser257. Dimethylallyl diphosphate contacts are provided by Ser213, Ser214, Asn215, and Ser257. Residues Ser213, Ser214, Asn215, and Ser257 each coordinate isopentenyl diphosphate.

This sequence belongs to the IspH family. [4Fe-4S] cluster is required as a cofactor.

It carries out the reaction isopentenyl diphosphate + 2 oxidized [2Fe-2S]-[ferredoxin] + H2O = (2E)-4-hydroxy-3-methylbut-2-enyl diphosphate + 2 reduced [2Fe-2S]-[ferredoxin] + 2 H(+). The enzyme catalyses dimethylallyl diphosphate + 2 oxidized [2Fe-2S]-[ferredoxin] + H2O = (2E)-4-hydroxy-3-methylbut-2-enyl diphosphate + 2 reduced [2Fe-2S]-[ferredoxin] + 2 H(+). It participates in isoprenoid biosynthesis; dimethylallyl diphosphate biosynthesis; dimethylallyl diphosphate from (2E)-4-hydroxy-3-methylbutenyl diphosphate: step 1/1. It functions in the pathway isoprenoid biosynthesis; isopentenyl diphosphate biosynthesis via DXP pathway; isopentenyl diphosphate from 1-deoxy-D-xylulose 5-phosphate: step 6/6. Catalyzes the conversion of 1-hydroxy-2-methyl-2-(E)-butenyl 4-diphosphate (HMBPP) into a mixture of isopentenyl diphosphate (IPP) and dimethylallyl diphosphate (DMAPP). Acts in the terminal step of the DOXP/MEP pathway for isoprenoid precursor biosynthesis. In Helicobacter hepaticus (strain ATCC 51449 / 3B1), this protein is 4-hydroxy-3-methylbut-2-enyl diphosphate reductase.